We begin with the raw amino-acid sequence, 236 residues long: Small ribosomal subunit protein uS2c (236 aa).

It belongs to the universal ribosomal protein uS2 family.

It is found in the plastid. The protein resides in the chloroplast. The chain is Small ribosomal subunit protein uS2c (rps2) from Lotus japonicus (Lotus corniculatus var. japonicus).